A 729-amino-acid chain; its full sequence is E3 ubiquitin-protein ligase Trim36 (729 aa).

The segment at 33-84 adopts an RING-type; degenerate zinc-finger fold; the sequence is CPACKELFTHPLILPCQHSVCHKCVKELLLSLDDSFNDVASDSSNQSSPRLR. B box-type zinc fingers lie at residues 154–192 and 207–249; these read AIMC…WGTV and PKVL…VTTM. Cys-212, His-215, Cys-235, and His-241 together coordinate Zn(2+). The stretch at 271 to 302 forms a coiled coil; it reads ESQVKSQISELNLLMKETECNGERAKEEALAH. In terms of domain architecture, COS spans 356-413; it reads LKETDQSCFVQTAKQLHLRIQKATESLKSFRPAAQASFEDYVVNISKQTEVLGELSFF. The Fibronectin type-III domain maps to 416–511; it reads GIDIPEINEE…RELILHTPPA (96 aa). In terms of domain architecture, B30.2/SPRY spans 509–723; it reads PPAPVFSFLF…LEEAITAKYL (215 aa). The interval 606-626 is disordered; that stretch reads RDAASPRYEQDSGHDSGSEDA. Residues 613 to 622 show a composition bias toward basic and acidic residues; sequence YEQDSGHDSG.

It belongs to the TRIM/RBCC family. In terms of assembly, interacts with CENPH. In terms of tissue distribution, expressed in testis. Strongly expressed in the neural tube region in 14.5 dpc embryos.

Its subcellular location is the cytoplasm. It is found in the cytoplasmic vesicle. It localises to the secretory vesicle. The protein resides in the acrosome. The protein localises to the cytoskeleton. The enzyme catalyses S-ubiquitinyl-[E2 ubiquitin-conjugating enzyme]-L-cysteine + [acceptor protein]-L-lysine = [E2 ubiquitin-conjugating enzyme]-L-cysteine + N(6)-ubiquitinyl-[acceptor protein]-L-lysine.. Functionally, E3 ubiquitin-protein ligase which mediates ubiquitination and subsequent proteasomal degradation of target proteins. Involved in chromosome segregation and cell cycle regulation. May play a role in the acrosome reaction and fertilization. The sequence is that of E3 ubiquitin-protein ligase Trim36 (Trim36) from Mus musculus (Mouse).